The following is a 94-amino-acid chain: MLVFSKFLTRTEPFMIHLFILAMFVMIYKFFPGGFENNFSVANPDKKASWIDCIYFGVTTHSTVGFGDILPKTTGAKLCTIAHIVTVFFIVLTL.

A helical membrane pass occupies residues 14 to 34; the sequence is FMIHLFILAMFVMIYKFFPGG. N-linked (GlcNAc...) asparagine; by host glycosylation occurs at Asn38. A helical transmembrane segment spans residues 74-94; that stretch reads TGAKLCTIAHIVTVFFIVLTL.

It belongs to the two pore domain potassium channel (TC 1.A.1.12) family.

It localises to the membrane. Functionally, potassium-selective channel essential in the virus replication cycle. May be involved in preventing multiple infections (Potential). The protein is Potassium channel protein kcv (A250R) of Paramecium bursaria Chlorella virus 1 (PBCV-1).